The chain runs to 521 residues: MAKISRALISVSDKTGIVDFSKELAGYGVEILSTGGTAKLLREAGLAVKDVSEFTGFPEMLDGRVKTLHPKVHGGLLGMRGNSEHVATMKAHGIEPIDMVVVNLYPFEATVAKPDCSLEDAIENIDIGGPTMLRSAAKNNADVTVLVDHNDYRKVLDEMKQSGGAVSSATNFGLAVKVYQHTAAYDGAISNWLGARTGEGVAEYPDTLTFQFKKAQGMRYGENPHQSAAFYVERDVKEASIATALQLQGKELSYNNIGDTDAALECIKQFNEGPACVIVKHANPCGVAIGANLLDAYDRAYKTDPESAFGGIIAFNGELDEAAAKAIVDRQFVEVIIAPKVSAKASEIVAAKKNVRLLQCGQWQAESLARLDMKRVNGGLLVQQTDLSLHGELKVVTKRQPTEKEMIDLLFTWRVAKFVKSNAIVYGKDGMTIGVGAGQMSRVNSARIAAIKAEHAGLQVAGAVMASDAFFPFRDGIDNAAQVGITAVIQPGGSMRDEEVIAAADEHGMAMVFTSMRHFRH.

The 147-residue stretch at 1–147 (MAKISRALIS…KNNADVTVLV (147 aa)) folds into the MGS-like domain.

Belongs to the PurH family.

The enzyme catalyses (6R)-10-formyltetrahydrofolate + 5-amino-1-(5-phospho-beta-D-ribosyl)imidazole-4-carboxamide = 5-formamido-1-(5-phospho-D-ribosyl)imidazole-4-carboxamide + (6S)-5,6,7,8-tetrahydrofolate. It catalyses the reaction IMP + H2O = 5-formamido-1-(5-phospho-D-ribosyl)imidazole-4-carboxamide. Its pathway is purine metabolism; IMP biosynthesis via de novo pathway; 5-formamido-1-(5-phospho-D-ribosyl)imidazole-4-carboxamide from 5-amino-1-(5-phospho-D-ribosyl)imidazole-4-carboxamide (10-formyl THF route): step 1/1. It participates in purine metabolism; IMP biosynthesis via de novo pathway; IMP from 5-formamido-1-(5-phospho-D-ribosyl)imidazole-4-carboxamide: step 1/1. This chain is Bifunctional purine biosynthesis protein PurH, found in Geotalea daltonii (strain DSM 22248 / JCM 15807 / FRC-32) (Geobacter daltonii).